Reading from the N-terminus, the 1404-residue chain is DNA-directed RNA polymerase subunit beta' (1404 aa).

The Zn(2+) site is built by cysteine 70, cysteine 72, cysteine 85, and cysteine 88. The Mg(2+) site is built by aspartate 460, aspartate 462, and aspartate 464. Residues cysteine 825, cysteine 899, cysteine 906, and cysteine 909 each contribute to the Zn(2+) site.

Belongs to the RNA polymerase beta' chain family. As to quaternary structure, the RNAP catalytic core consists of 2 alpha, 1 beta, 1 beta' and 1 omega subunit. When a sigma factor is associated with the core the holoenzyme is formed, which can initiate transcription. Mg(2+) serves as cofactor. Zn(2+) is required as a cofactor.

It carries out the reaction RNA(n) + a ribonucleoside 5'-triphosphate = RNA(n+1) + diphosphate. DNA-dependent RNA polymerase catalyzes the transcription of DNA into RNA using the four ribonucleoside triphosphates as substrates. The protein is DNA-directed RNA polymerase subunit beta' of Nitrosomonas europaea (strain ATCC 19718 / CIP 103999 / KCTC 2705 / NBRC 14298).